A 430-amino-acid chain; its full sequence is Tol-Pal system protein TolB (430 aa).

Residues 1 to 21 (MKQALRVAFGFLILWASVLHA) form the signal peptide.

The protein belongs to the TolB family. As to quaternary structure, the Tol-Pal system is composed of five core proteins: the inner membrane proteins TolA, TolQ and TolR, the periplasmic protein TolB and the outer membrane protein Pal. They form a network linking the inner and outer membranes and the peptidoglycan layer.

It localises to the periplasm. Functionally, part of the Tol-Pal system, which plays a role in outer membrane invagination during cell division and is important for maintaining outer membrane integrity. TolB occupies a key intermediary position in the Tol-Pal system because it communicates directly with both membrane-embedded components, Pal in the outer membrane and TolA in the inner membrane. The polypeptide is Tol-Pal system protein TolB (Shigella flexneri serotype 5b (strain 8401)).